Consider the following 556-residue polypeptide: Probable zinc metalloprotease EGY2, chloroplastic (556 aa).

The N-terminal 64 residues, methionine 1–arginine 64, are a transit peptide targeting the chloroplast. A disordered region spans residues valine 63–glycine 133. The next 7 helical transmembrane spans lie at alanine 267–leucine 287, leucine 311–valine 331, glycine 336–isoleucine 356, alanine 374–valine 394, proline 437–glycine 457, leucine 484–phenylalanine 504, and leucine 527–threonine 547.

It belongs to the peptidase M50B family.

Its subcellular location is the plastid. It localises to the chloroplast membrane. In terms of biological role, probable membrane-associated metalloprotease that may be involved in chloroplast development. This is Probable zinc metalloprotease EGY2, chloroplastic (EGY2) from Arabidopsis thaliana (Mouse-ear cress).